A 261-amino-acid polypeptide reads, in one-letter code: UPF0246 protein Reut_A1014 (261 aa).

Belongs to the UPF0246 family.

The chain is UPF0246 protein Reut_A1014 from Cupriavidus pinatubonensis (strain JMP 134 / LMG 1197) (Cupriavidus necator (strain JMP 134)).